The following is a 570-amino-acid chain: Frizzled-2 (570 aa).

A signal peptide spans 1–28; the sequence is MRARSALPRSALPRLLLPLLLLPAAGPA. The Extracellular segment spans residues 29 to 252; the sequence is QFHGEKGISI…HHHTRFARLW (224 aa). Residues 39–158 form the FZ domain; the sequence is PDHGFCQPIS…HGAEQICVGQ (120 aa). 5 disulfide bridges follow: Cys44–Cys105, Cys52–Cys98, Cys89–Cys126, Cys115–Cys155, and Cys119–Cys143. The N-linked (GlcNAc...) asparagine glycan is linked to Asn58. Asn159 carries N-linked (GlcNAc...) asparagine glycosylation. Positions 166 to 194 are disordered; the sequence is PALLTTAPPSGLQPGAGGTPGGPGGGGAP. Residues 179–193 are compositionally biased toward gly residues; sequence PGAGGTPGGPGGGGA. Residues 253-273 form a helical membrane-spanning segment; sequence ILTWSVLCCASTFFTVTTSLV. Over 274–284 the chain is Cytoplasmic; sequence AMQRFRYPERP. A helical transmembrane segment spans residues 285-305; that stretch reads IIFLSGCYTMVSVAYIAGFVL. Topologically, residues 306–332 are extracellular; sequence QERVVCNERFSEDGYRTVGQGTKKEGC. The helical transmembrane segment at 333–353 threads the bilayer; sequence TILFMMLYFFSMASSIWWVIL. At 354–375 the chain is on the cytoplasmic side; it reads SLTWFLAAGMKWGHAAIEANSQ. The helical transmembrane segment at 376–396 threads the bilayer; it reads YFHLAAWAVPAVKTITILAMG. At 397-419 the chain is on the extracellular side; that stretch reads QIDGDLLSGVCFVGLNRLDPLRG. Residues 420–440 form a helical membrane-spanning segment; the sequence is FVLAPLFVYLFIGTSFLLAGF. At 441–466 the chain is on the cytoplasmic side; that stretch reads VSLFRIRTIMKHDGTKTEPLERLMVR. The chain crosses the membrane as a helical span at residues 467-487; the sequence is IGVFSVLYTVPATIVIACYFY. Topologically, residues 488 to 524 are extracellular; that stretch reads EQAFREHWERSWVSQHCKSLAIPCPAHYTPRTSPDFT. A helical transmembrane segment spans residues 525 to 545; that stretch reads VYMIKYLMTLIVGITSGFWIW. At 546 to 570 the chain is on the cytoplasmic side; the sequence is SGKTLHSWRKFYTRLTNSRHGETTV. Positions 548–553 match the Lys-Thr-X-X-X-Trp motif, mediates interaction with the PDZ domain of Dvl family members motif; sequence KTLHSW. Residues 568–570 carry the PDZ-binding motif; that stretch reads TTV.

The protein belongs to the G-protein coupled receptor Fz/Smo family. Ubiquitinated by ZNRF3, leading to its degradation by the proteasome. Widely expressed. Most abundant in kidney, liver, uterus, ovary and heart. Lower levels seen in brain and intestine. Extremely low in calvaria, mammary glands and testis.

The protein localises to the membrane. It localises to the cell membrane. In terms of biological role, receptor for Wnt proteins. Most of frizzled receptors are coupled to the beta-catenin canonical signaling pathway, which leads to the activation of disheveled proteins, inhibition of GSK-3 kinase, nuclear accumulation of beta-catenin and activation of Wnt target genes. A second signaling pathway involving PKC and calcium fluxes has been seen for some family members, but it is not yet clear if it represents a distinct pathway or if it can be integrated in the canonical pathway, as PKC seems to be required for Wnt-mediated inactivation of GSK-3 kinase. Both pathways seem to involve interactions with G-proteins. May be involved in transduction and intercellular transmission of polarity information during tissue morphogenesis and/or in differentiated tissues. Activation by Wnt5A stimulates PKC activity via a G-protein-dependent mechanism. The protein is Frizzled-2 (Fzd2) of Rattus norvegicus (Rat).